Here is a 282-residue protein sequence, read N- to C-terminus: Succinate dehydrogenase [ubiquinone] iron-sulfur subunit, mitochondrial (282 aa).

A 2Fe-2S ferredoxin-type domain is found at 43–131; that stretch reads YRFNPEAPGA…STKIYPLPHM (89 aa). The [2Fe-2S] cluster site is built by C91, C96, C99, and C111. Residues 174–204 enclose the 4Fe-4S ferredoxin-type domain; it reads ERDRLDGLYECILCACCSTSCPSYWWNADKY. [4Fe-4S] cluster contacts are provided by C184, C187, and C190. C194 contributes to the [3Fe-4S] cluster binding site. W199 provides a ligand contact to a ubiquinone. [3Fe-4S] cluster is bound by residues C241 and C247. C251 is a [4Fe-4S] cluster binding site.

This sequence belongs to the succinate dehydrogenase/fumarate reductase iron-sulfur protein family. Component of complex II composed of four subunits: a flavoprotein (FP), an iron-sulfur protein (IP), and a cytochrome b composed of a large and a small subunit. [2Fe-2S] cluster is required as a cofactor. Requires [3Fe-4S] cluster as cofactor. The cofactor is [4Fe-4S] cluster.

Its subcellular location is the mitochondrion inner membrane. The catalysed reaction is a quinone + succinate = fumarate + a quinol. It participates in carbohydrate metabolism; tricarboxylic acid cycle; fumarate from succinate (eukaryal route): step 1/1. Iron-sulfur protein (IP) subunit of succinate dehydrogenase (SDH) that is involved in complex II of the mitochondrial electron transport chain and is responsible for transferring electrons from succinate to ubiquinone (coenzyme Q). The polypeptide is Succinate dehydrogenase [ubiquinone] iron-sulfur subunit, mitochondrial (Caenorhabditis briggsae).